A 252-amino-acid polypeptide reads, in one-letter code: MVRIGLLGCGNVGRIIATHQDGFTVEALFDRLPDHAEELARMCGAPAYADFQEFISQDFDICVEAASVLAVREYAPKILENGKHVLILSVGALSDTNFRKILLDVARSQGKKIHIPSGAIMGLDNLKVGGISRIDSVLLRTTKSPASLGMQVSHRTLAFRGKANECIKQFPKNINVSVALALAVHHDVDVELWADPEVDRNIHDIFVSGEFGEASIRVVNHPSPDNPATSYLAALSVLSLLKNLDSPLVIGS.

NAD(+)-binding residues include A119 and N175. H203 is a catalytic residue.

The protein belongs to the L-aspartate dehydrogenase family.

The catalysed reaction is L-aspartate + NADP(+) + H2O = oxaloacetate + NH4(+) + NADPH + H(+). The enzyme catalyses L-aspartate + NAD(+) + H2O = oxaloacetate + NH4(+) + NADH + H(+). Its pathway is cofactor biosynthesis; NAD(+) biosynthesis; iminoaspartate from L-aspartate (dehydrogenase route): step 1/1. Its function is as follows. Specifically catalyzes the NAD or NADP-dependent dehydrogenation of L-aspartate to iminoaspartate. This is L-aspartate dehydrogenase from Methanospirillum hungatei JF-1 (strain ATCC 27890 / DSM 864 / NBRC 100397 / JF-1).